The sequence spans 493 residues: Na(+)/H(+) antiporter subunit D (493 aa).

15 helical membrane passes run 3-23 (NFVI…IFMT), 31-51 (IFST…VQTV), 77-97 (FASL…LYSF), 107-127 (SFYY…FLTG), 129-149 (LFNM…LIVL), 163-183 (IVFN…LYAV), 203-223 (GLIT…GGIF), 227-247 (FWLP…FGAL), 251-271 (VGLY…TAFT), 274-294 (LMIW…LAYS), 299-319 (IVIY…AVHT), 330-350 (LIHD…LIAL), 370-390 (GWMF…SGFV), 407-427 (ISML…RIFI), and 449-469 (LYPA…TEWV).

The protein belongs to the CPA3 antiporters (TC 2.A.63) subunit D family. As to quaternary structure, forms a heterooligomeric complex that consists of seven subunits: MrpA, MrpB, MrpC, MrpD, MrpE, MrpF and MrpG.

It is found in the cell membrane. Functionally, mrp complex is a Na(+)/H(+) antiporter that is considered to be the major Na(+) excretion system in B.subtilis. Has a major role in Na(+) resistance and a minor role in Na(+)- and K(+)-dependent pH homeostasis as compared to TetB. MrpA may be the actual Na(+)/H(+) antiporter, although the six other Mrp proteins are all required for Na(+)/H(+) antiport activity and Na(+) resistance. MrpA is required for initiation of sporulation when external Na(+) concentration increases. Also transports Li(+) but not K(+), Ca(2+) or Mg(2+). The protein is Na(+)/H(+) antiporter subunit D (mrpD) of Bacillus subtilis (strain 168).